A 409-amino-acid chain; its full sequence is Pentatricopeptide repeat-containing protein At5g09450, mitochondrial (409 aa).

A mitochondrion-targeting transit peptide spans 1-38; it reads MATRSLFHSLRCRLTNNGVLGSNFIRNAESSRFSKSYN. PPR repeat units follow at residues 155-189, 191-225, 226-256, 262-296, 298-332, and 333-367; these read TAETYTSLLHAYAASKQTERAEALFKRIIESDSLT, GAITYNEMMTLYMSVGQVEKVPEVIEVLKQKKVSP, DIFTYNLWLSSCAATFNIDELRKILEEMRHD, GWVRYIDLTSIYINSSRVTNAESTLPVEAEKSISQ, EWITYDFLMILHTGLGNKVMIDQIWKSLRNTNQIL, and SSRSYICVLSSYLMLGHLREAEEIIHQWKESKTTE.

It belongs to the PPR family. P subfamily.

The protein resides in the mitochondrion. This chain is Pentatricopeptide repeat-containing protein At5g09450, mitochondrial, found in Arabidopsis thaliana (Mouse-ear cress).